Here is a 749-residue protein sequence, read N- to C-terminus: Catalase-peroxidase 2 (749 aa).

Positions 1-27 (MFKRTIPLFAAFTLAISPSVFPNYAYA) are cleaved as a signal peptide. The tryptophyl-tyrosyl-methioninium (Trp-Tyr) (with M-255) cross-link spans 107 to 229 (WHAAGTYRIY…LAATVMGLIY (123 aa)). His-108 serves as the catalytic Proton acceptor. A cross-link (tryptophyl-tyrosyl-methioninium (Tyr-Met) (with W-107)) is located at residues 229 to 255 (YVNPEGPNGVPDPLAAAEKIRETFGRM). Residue His-270 coordinates heme b.

This sequence belongs to the peroxidase family. Peroxidase/catalase subfamily. Homodimer or homotetramer. Heme b is required as a cofactor. In terms of processing, formation of the three residue Trp-Tyr-Met cross-link is important for the catalase, but not the peroxidase activity of the enzyme.

It catalyses the reaction H2O2 + AH2 = A + 2 H2O. It carries out the reaction 2 H2O2 = O2 + 2 H2O. Functionally, bifunctional enzyme with both catalase and broad-spectrum peroxidase activity. This is Catalase-peroxidase 2 from Legionella pneumophila (strain Paris).